A 117-amino-acid polypeptide reads, in one-letter code: Putative membrane protein insertion efficiency factor (117 aa).

Positions 87 to 117 (RKGGPSAAEPAIEGHIPSSPAAETPSHVQGA) are disordered.

It belongs to the UPF0161 family.

It is found in the cell membrane. In terms of biological role, could be involved in insertion of integral membrane proteins into the membrane. The chain is Putative membrane protein insertion efficiency factor from Streptomyces avermitilis (strain ATCC 31267 / DSM 46492 / JCM 5070 / NBRC 14893 / NCIMB 12804 / NRRL 8165 / MA-4680).